The chain runs to 1264 residues: Valine--tRNA ligase (1264 aa).

At Ser-2 the chain carries N-acetylserine. Residues 89–219 (GSRAAVLVQQ…YSGARSVTQQ (131 aa)) enclose the GST C-terminal domain. Residues 218–230 (QQPGSEITAPQKT) are compositionally biased toward polar residues. Residues 218–296 (QQPGSEITAP…GEKKDVSGTM (79 aa)) are disordered. Composition is skewed to basic and acidic residues over residues 234 to 248 (LKKE…EKFQ) and 260 to 275 (HGEK…KRDP). The 'HIGH' region motif lies at 344 to 354 (PNVTGSLHLGH). A phosphoserine mark is found at Ser-437 and Ser-527. The residue at position 645 (Lys-645) is an N6-acetyllysine. Positions 862–866 (KMSKS) match the 'KMSKS' region motif. Lys-865 is a binding site for ATP.

This sequence belongs to the class-I aminoacyl-tRNA synthetase family. Forms high-molecular-mass aggregates with elongation factor 1.

The enzyme catalyses tRNA(Val) + L-valine + ATP = L-valyl-tRNA(Val) + AMP + diphosphate. Can be regulated by protein kinase C-dependent phosphorylation. The chain is Valine--tRNA ligase (Vars1) from Rattus norvegicus (Rat).